The following is a 372-amino-acid chain: Histidinol-phosphate aminotransferase (372 aa).

Position 229 is an N6-(pyridoxal phosphate)lysine (K229).

Belongs to the class-II pyridoxal-phosphate-dependent aminotransferase family. Histidinol-phosphate aminotransferase subfamily. Homodimer. The cofactor is pyridoxal 5'-phosphate.

The catalysed reaction is L-histidinol phosphate + 2-oxoglutarate = 3-(imidazol-4-yl)-2-oxopropyl phosphate + L-glutamate. Its pathway is amino-acid biosynthesis; L-histidine biosynthesis; L-histidine from 5-phospho-alpha-D-ribose 1-diphosphate: step 7/9. The protein is Histidinol-phosphate aminotransferase of Bdellovibrio bacteriovorus (strain ATCC 15356 / DSM 50701 / NCIMB 9529 / HD100).